Here is a 757-residue protein sequence, read N- to C-terminus: Cellulose synthase-like protein B1 (757 aa).

Transmembrane regions (helical) follow at residues 18 to 38 (TNYF…SLLL) and 50 to 70 (VWLV…LITC). Residue D136 is part of the active site. Residues 186-216 (EFNRDWEKTKREYEKLRRKVEDATGDSHMLD) adopt a coiled-coil conformation. D462 is a catalytic residue. The next 6 membrane-spanning stretches (helical) occupy residues 533-553 (LAYL…YCLL), 569-589 (LYLG…LWEF), 615-635 (LFSI…VFII), 674-694 (FLPG…FSVG), 710-730 (AEAC…MGLF), and 737-757 (TPLS…VFSV).

It belongs to the glycosyltransferase 2 family. Plant cellulose synthase-like B subfamily. Expressed in young seedlings, primarily in the vascular tissue.

It localises to the golgi apparatus membrane. In terms of biological role, thought to be a Golgi-localized beta-glycan synthase that polymerize the backbones of noncellulosic polysaccharides (hemicelluloses) of plant cell wall. The protein is Cellulose synthase-like protein B1 (CSLB1) of Arabidopsis thaliana (Mouse-ear cress).